Consider the following 307-residue polypeptide: Metapyrocatechase (307 aa).

VOC domains are found at residues 7–122 (RPGH…LYAD) and 150–269 (RFDH…VFCG). The Fe cation site is built by histidine 153, histidine 214, and glutamate 265.

The protein belongs to the extradiol ring-cleavage dioxygenase family. In terms of assembly, homotetramer. It depends on Fe(2+) as a cofactor.

The enzyme catalyses catechol + O2 = (2Z,4E)-2-hydroxy-6-oxohexa-2,4-dienoate + H(+). It functions in the pathway xenobiotic degradation; toluene degradation. The chain is Metapyrocatechase (bztE) from Pseudomonas aeruginosa.